The chain runs to 569 residues: Peroxynitrite isomerase THAP4 (569 aa).

The THAP-type zinc-finger motif lies at 1-85 (MVICCAAVNC…LKPTAVPSIF (85 aa)). A disordered region spans residues 83-219 (SIFHLSEKKR…GISMDDFTPP (137 aa)). Polar residues predominate over residues 121 to 130 (IGSSLSSSDN). A Phosphoserine modification is found at Ser159. Positions 196-210 (ASSSAADAGGADKSG) are enriched in low complexity. Positions 230–233 (LHSY) match the HCFC1-binding motif (HBM) motif. Ser234 is subject to Phosphoserine. Residues 235–312 (FSSKHTRERP…EAVQSEHSDA (78 aa)) form a disordered region. The segment covering 242-262 (ERPSVPREPMDRKRLKRDIEP) has biased composition (basic and acidic residues). Over residues 265–279 (SGNSVAQSPPSSSLT) the composition is skewed to polar residues. Over residues 280 to 289 (ATPQKASQSP) the composition is skewed to low complexity. The interval 407 to 569 (PPKLNPVVEP…LHITYKKVTP (163 aa)) is nitrobindin. Heme b is bound by residues Thr436 and His559.

In the C-terminal section; belongs to the nitrobindin family. In terms of assembly, homodimer. Requires heme b as cofactor.

The protein localises to the cytoplasm. It is found in the nucleus. The enzyme catalyses peroxynitrite = nitrate. Its pathway is nitrogen metabolism. Functionally, heme-binding protein able to scavenge peroxynitrite and to protect free L-tyrosine against peroxynitrite-mediated nitration, by acting as a peroxynitrite isomerase that converts peroxynitrite to nitrate. Therefore, this protein likely plays a role in peroxynitrite sensing and in the detoxification of reactive nitrogen and oxygen species (RNS and ROS, respectively). Is able to bind nitric oxide (NO) in vitro, but may act as a sensor of peroxynitrite levels in vivo, possibly modulating the transcriptional activity residing in the N-terminal region. This chain is Peroxynitrite isomerase THAP4, found in Rattus norvegicus (Rat).